The primary structure comprises 360 residues: Photosystem II protein D1 (360 aa).

A run of 3 helical transmembrane segments spans residues 29-46 (YIGW…TATT), 118-133 (HFLL…EWEL), and 142-156 (WICV…AATA). H118 contributes to the chlorophyll a binding site. Y126 provides a ligand contact to pheophytin a. Residues D170 and E189 each contribute to the [CaMn4O5] cluster site. Residues 197 to 218 (FHMAGVAGVFGGALFSAMHGSL) form a helical membrane-spanning segment. H198 serves as a coordination point for chlorophyll a. Residues H215 and 264–265 (SF) each bind a quinone. H215 lines the Fe cation pocket. A Fe cation-binding site is contributed by H272. Residues 274–288 (FLGLWPVVGIWLTSI) traverse the membrane as a helical segment. [CaMn4O5] cluster-binding residues include H332, E333, D342, and A344. The propeptide occupies 345–360 (DNSLLPVASSSPSINS).

Belongs to the reaction center PufL/M/PsbA/D family. PSII is composed of 1 copy each of membrane proteins PsbA, PsbB, PsbC, PsbD, PsbE, PsbF, PsbH, PsbI, PsbJ, PsbK, PsbL, PsbM, PsbT, PsbY, PsbZ, Psb30/Ycf12, at least 3 peripheral proteins of the oxygen-evolving complex and a large number of cofactors. It forms dimeric complexes. The D1/D2 heterodimer binds P680, chlorophylls that are the primary electron donor of PSII, and subsequent electron acceptors. It shares a non-heme iron and each subunit binds pheophytin, quinone, additional chlorophylls, carotenoids and lipids. D1 provides most of the ligands for the Mn4-Ca-O5 cluster of the oxygen-evolving complex (OEC). There is also a Cl(-1) ion associated with D1 and D2, which is required for oxygen evolution. The PSII complex binds additional chlorophylls, carotenoids and specific lipids. serves as cofactor. In terms of processing, tyr-161 forms a radical intermediate that is referred to as redox-active TyrZ, YZ or Y-Z.

The protein localises to the plastid. It localises to the chloroplast thylakoid membrane. It catalyses the reaction 2 a plastoquinone + 4 hnu + 2 H2O = 2 a plastoquinol + O2. Photosystem II (PSII) is a light-driven water:plastoquinone oxidoreductase that uses light energy to abstract electrons from H(2)O, generating O(2) and a proton gradient subsequently used for ATP formation. It consists of a core antenna complex that captures photons, and an electron transfer chain that converts photonic excitation into a charge separation. The D1/D2 (PsbA/PsbD) reaction center heterodimer binds P680, the primary electron donor of PSII as well as several subsequent electron acceptors. This is Photosystem II protein D1 from Cyanidium caldarium (Red alga).